A 261-amino-acid chain; its full sequence is Cytochrome c oxidase subunit 3 (261 aa).

Over 1 to 15 (MTHQTHAYHMVNPSP) the chain is Mitochondrial matrix. Residues 16–34 (WPLTGALSALLMTSGLAMW) form a helical membrane-spanning segment. Residues 35–40 (FHYNSM) lie on the Mitochondrial intermembrane side of the membrane. A helical transmembrane segment spans residues 41–66 (LLLTLGLMTNLLTMYQWWRDIVREST). The Mitochondrial matrix segment spans residues 67–72 (FQGHHT). Residues 73 to 105 (LVVQKGLRYGMILFIISEVFFFSGFFWAFYHSS) traverse the membrane as a helical segment. The Mitochondrial intermembrane segment spans residues 106 to 128 (LAPTPELGGCWPPTGIHPLNPME). Residues 129-152 (VPLLNTSVLLASGVSITWAHHSLM) traverse the membrane as a helical segment. The Mitochondrial matrix segment spans residues 153-155 (EGN). A helical membrane pass occupies residues 156-183 (RKHMLQALFITISLGVYFTLLQASEYYE). At 184–190 (APFTISD) the chain is on the mitochondrial intermembrane side. A helical membrane pass occupies residues 191-223 (GIYGSTFFVATGFHGLHVIIGSTFLIVCFLRQL). Topologically, residues 224-232 (KFHFTSNHH) are mitochondrial matrix. Residues 233–256 (FGFEAAAWYWHFVDVVWLFLYVSI) form a helical membrane-spanning segment. Topologically, residues 257–261 (YWWGS) are mitochondrial intermembrane.

It belongs to the cytochrome c oxidase subunit 3 family. As to quaternary structure, component of the cytochrome c oxidase (complex IV, CIV), a multisubunit enzyme composed of 14 subunits. The complex is composed of a catalytic core of 3 subunits MT-CO1, MT-CO2 and MT-CO3, encoded in the mitochondrial DNA, and 11 supernumerary subunits COX4I, COX5A, COX5B, COX6A, COX6B, COX6C, COX7A, COX7B, COX7C, COX8 and NDUFA4, which are encoded in the nuclear genome. The complex exists as a monomer or a dimer and forms supercomplexes (SCs) in the inner mitochondrial membrane with NADH-ubiquinone oxidoreductase (complex I, CI) and ubiquinol-cytochrome c oxidoreductase (cytochrome b-c1 complex, complex III, CIII), resulting in different assemblies (supercomplex SCI(1)III(2)IV(1) and megacomplex MCI(2)III(2)IV(2)).

It is found in the mitochondrion inner membrane. It catalyses the reaction 4 Fe(II)-[cytochrome c] + O2 + 8 H(+)(in) = 4 Fe(III)-[cytochrome c] + 2 H2O + 4 H(+)(out). In terms of biological role, component of the cytochrome c oxidase, the last enzyme in the mitochondrial electron transport chain which drives oxidative phosphorylation. The respiratory chain contains 3 multisubunit complexes succinate dehydrogenase (complex II, CII), ubiquinol-cytochrome c oxidoreductase (cytochrome b-c1 complex, complex III, CIII) and cytochrome c oxidase (complex IV, CIV), that cooperate to transfer electrons derived from NADH and succinate to molecular oxygen, creating an electrochemical gradient over the inner membrane that drives transmembrane transport and the ATP synthase. Cytochrome c oxidase is the component of the respiratory chain that catalyzes the reduction of oxygen to water. Electrons originating from reduced cytochrome c in the intermembrane space (IMS) are transferred via the dinuclear copper A center (CU(A)) of subunit 2 and heme A of subunit 1 to the active site in subunit 1, a binuclear center (BNC) formed by heme A3 and copper B (CU(B)). The BNC reduces molecular oxygen to 2 water molecules using 4 electrons from cytochrome c in the IMS and 4 protons from the mitochondrial matrix. The polypeptide is Cytochrome c oxidase subunit 3 (MT-CO3) (Ceratotherium simum (White rhinoceros)).